Reading from the N-terminus, the 516-residue chain is Arginyl-tRNA--protein transferase 1 (516 aa).

Residues 150 to 180 (IESEEKEKEKSIKKEGSKEFIHPQSIEEKLG) show a composition bias toward basic and acidic residues. The interval 150 to 206 (IESEEKEKEKSIKKEGSKEFIHPQSIEEKLGSGEPSHPIKVHIGPKPGKGADLSKPP) is disordered.

This sequence belongs to the R-transferase family. In terms of assembly, monomer. Interacts with LIAT1; LIAT1 is not a substrate of ATE1, the interaction takes place in the cytoplasm and seems to increase ATE1 arginyltransferase activity. As to quaternary structure, interacts with LIAT1; has a higher affinity than the other isoforms. As to expression, widely expressed.

The protein resides in the nucleus. It localises to the cytoplasm. It carries out the reaction an N-terminal L-alpha-aminoacyl-[protein] + L-arginyl-tRNA(Arg) = an N-terminal L-arginyl-L-aminoacyl-[protein] + tRNA(Arg) + H(+). In terms of biological role, involved in the post-translational conjugation of arginine to the N-terminal aspartate or glutamate of a protein. This arginylation is required for degradation of the protein via the ubiquitin pathway. Does not arginylate cysteine residues. The sequence is that of Arginyl-tRNA--protein transferase 1 from Mus musculus (Mouse).